A 567-amino-acid chain; its full sequence is Lipase maturation factor 1 (567 aa).

The segment at 1 to 39 is disordered; sequence MRPDSPTMAAPAESLRRRKTGYSDPEPESPPAPGRGPAG. Topologically, residues 1-49 are cytoplasmic; sequence MRPDSPTMAAPAESLRRRKTGYSDPEPESPPAPGRGPAGSPAHLHTGTF. A helical transmembrane segment spans residues 50–72; sequence WLTRIVLLKALAFVYFVAFLVAF. Over 73 to 127 the chain is Lumenal; sequence HQNKQLIGDRGLLPCRVFLKNFQQYFQDRTSWEVFSYMPTILWLMDWSDMNSNLD. The helical transmembrane segment at 128–151 threads the bilayer; it reads LLALLGLGISSFVLITGCANMLLM. Residues 152–207 are Cytoplasmic-facing; the sequence is AALWGLYMSLVNVGHVWYSFGWESQLLETGFLGIFLCPLWTLSRLPQHTPTSRIVL. Residues 208–221 traverse the membrane as a helical segment; the sequence is WGFRWLIFRIMLGA. Residues 222-292 lie on the Lumenal side of the membrane; sequence GLIKIRGDRC…LGRRACIIHG (71 aa). A helical membrane pass occupies residues 293-321; that stretch reads VLQILFQAVLIVSGNLSFLNWLTMVPSLA. Over 322-367 the chain is Cytoplasmic; sequence CFDDATLGFLFPSGPGSLKDRVLQMQRDIRGARPEPRFGSVVRRAA. The chain crosses the membrane as a helical span at residues 368–388; that stretch reads NVSLGVLLAWLSVPVVLNLLS. At 389-567 the chain is on the lumenal side; sequence SRQVMNTHFN…DRGWPLPGPL (179 aa).

This sequence belongs to the lipase maturation factor family. Interacts with LPL and SEL1L.

It is found in the endoplasmic reticulum membrane. Its function is as follows. Involved in the maturation of specific proteins in the endoplasmic reticulum. Required for maturation and transport of active lipoprotein lipase (LPL) through the secretory pathway. Each LMF1 molecule chaperones 50 or more molecules of LPL. The protein is Lipase maturation factor 1 (LMF1) of Homo sapiens (Human).